We begin with the raw amino-acid sequence, 375 residues long: Queuine tRNA-ribosyltransferase (375 aa).

The active-site Proton acceptor is Asp-89. Residues 89–93 (DSGGF), Asp-143, Gln-185, and Gly-212 each bind substrate. The RNA binding stretch occupies residues 243–249 (GVGKPED). Asp-262 serves as the catalytic Nucleophile. The interval 267–271 (TRNAR) is RNA binding; important for wobble base 34 recognition. Cys-300, Cys-302, Cys-305, and His-331 together coordinate Zn(2+).

It belongs to the queuine tRNA-ribosyltransferase family. In terms of assembly, homodimer. Within each dimer, one monomer is responsible for RNA recognition and catalysis, while the other monomer binds to the replacement base PreQ1. Zn(2+) is required as a cofactor.

The enzyme catalyses 7-aminomethyl-7-carbaguanine + guanosine(34) in tRNA = 7-aminomethyl-7-carbaguanosine(34) in tRNA + guanine. Its pathway is tRNA modification; tRNA-queuosine biosynthesis. In terms of biological role, catalyzes the base-exchange of a guanine (G) residue with the queuine precursor 7-aminomethyl-7-deazaguanine (PreQ1) at position 34 (anticodon wobble position) in tRNAs with GU(N) anticodons (tRNA-Asp, -Asn, -His and -Tyr). Catalysis occurs through a double-displacement mechanism. The nucleophile active site attacks the C1' of nucleotide 34 to detach the guanine base from the RNA, forming a covalent enzyme-RNA intermediate. The proton acceptor active site deprotonates the incoming PreQ1, allowing a nucleophilic attack on the C1' of the ribose to form the product. After dissociation, two additional enzymatic reactions on the tRNA convert PreQ1 to queuine (Q), resulting in the hypermodified nucleoside queuosine (7-(((4,5-cis-dihydroxy-2-cyclopenten-1-yl)amino)methyl)-7-deazaguanosine). The chain is Queuine tRNA-ribosyltransferase from Pseudoalteromonas translucida (strain TAC 125).